The chain runs to 250 residues: Ino eighty subunit 3 (250 aa).

The disordered stretch occupies residues 29–70 (PDFLEKDPHHKKFHNADGLNQQGSSTPSTATDANAASTASTH). A compositionally biased stretch (low complexity) spans 52 to 70 (SSTPSTATDANAASTASTH). Phosphoserine occurs at positions 157 and 211.

Component of the chromatin-remodeling INO80 complex, at least composed of ARP4, ARP5, ARP8, RVB1, RVB2, TAF14, NHP10, IES1, IES3, IES4, IES6, ACT1, IES2, IES5 and INO80.

Its subcellular location is the nucleus. Probably involved in transcription regulation via its interaction with the INO80 complex, a chromatin-remodeling complex. This chain is Ino eighty subunit 3 (IES3), found in Saccharomyces cerevisiae (strain ATCC 204508 / S288c) (Baker's yeast).